A 184-amino-acid polypeptide reads, in one-letter code: Leucine-rich repeat-containing protein 20 (184 aa).

LRR repeat units follow at residues 51 to 72 (QIHL…FMTT), 75 to 96 (QLRE…VSAL), 98 to 120 (HLKA…TALP), 121 to 141 (ALET…EKLA), and 145 to 167 (ALRS…APPL). Serine 175 is subject to Phosphoserine.

In Homo sapiens (Human), this protein is Leucine-rich repeat-containing protein 20 (LRRC20).